The chain runs to 363 residues: uncharacterized protein (363 aa).

29–36 is an ATP binding site; it reads GSINSGKT.

Belongs to the archaeal ATPase family.

This is an uncharacterized protein from Methanocaldococcus jannaschii (strain ATCC 43067 / DSM 2661 / JAL-1 / JCM 10045 / NBRC 100440) (Methanococcus jannaschii).